Consider the following 461-residue polypeptide: Photosystem II CP43 reaction center protein (461 aa).

The propeptide occupies 1 to 2 (ME). Position 3 is an N-acetylthreonine (Thr-3). Phosphothreonine is present on Thr-3. A run of 5 helical transmembrane segments spans residues 57–81 (LFEV…PHLA), 122–143 (LLGP…KDRN), 166–188 (KALY…RKIT), 243–263 (KPFA…LSYS), and 279–300 (WFNN…ASQA). Glu-355 provides a ligand contact to [CaMn4O5] cluster. The chain crosses the membrane as a helical span at residues 435-459 (RARAAAAGFEKGIDRDFEPVLSMTP).

The protein belongs to the PsbB/PsbC family. PsbC subfamily. PSII is composed of 1 copy each of membrane proteins PsbA, PsbB, PsbC, PsbD, PsbE, PsbF, PsbH, PsbI, PsbJ, PsbK, PsbL, PsbM, PsbT, PsbX, PsbY, PsbZ, Psb30/Ycf12, at least 3 peripheral proteins of the oxygen-evolving complex and a large number of cofactors. It forms dimeric complexes. Requires Binds multiple chlorophylls and provides some of the ligands for the Ca-4Mn-5O cluster of the oxygen-evolving complex. It may also provide a ligand for a Cl- that is required for oxygen evolution. PSII binds additional chlorophylls, carotenoids and specific lipids. as cofactor.

The protein localises to the plastid. The protein resides in the chloroplast thylakoid membrane. Its function is as follows. One of the components of the core complex of photosystem II (PSII). It binds chlorophyll and helps catalyze the primary light-induced photochemical processes of PSII. PSII is a light-driven water:plastoquinone oxidoreductase, using light energy to abstract electrons from H(2)O, generating O(2) and a proton gradient subsequently used for ATP formation. The sequence is that of Photosystem II CP43 reaction center protein from Nicotiana sylvestris (Wood tobacco).